Consider the following 71-residue polypeptide: MSVYKVIDIIGTSPTSWEQAAAEAVQRARDSVDDIRVARVIEQDMAVDSAGKITYRIKLEVSFKMRPAQPR.

Position 18 (Glu-18) interacts with Ca(2+).

It belongs to the dodecin family. In terms of assembly, homododecamer; 12 subunits assemble to form a hollow sphere with a diameter of about 75 Angstroms. Calcium ions are bound at the interface between three subunits.

Binds calcium ions. May play a role in sequestering additional small ligands. In Mycobacterium tuberculosis (strain ATCC 25618 / H37Rv), this protein is Calcium dodecin (secE2).